We begin with the raw amino-acid sequence, 445 residues long: Phosphoglucosamine mutase (445 aa).

Catalysis depends on S102, which acts as the Phosphoserine intermediate. Residues S102, D241, D243, and D245 each contribute to the Mg(2+) site. Residue S102 is modified to Phosphoserine.

This sequence belongs to the phosphohexose mutase family. Requires Mg(2+) as cofactor. Activated by phosphorylation.

It carries out the reaction alpha-D-glucosamine 1-phosphate = D-glucosamine 6-phosphate. Catalyzes the conversion of glucosamine-6-phosphate to glucosamine-1-phosphate. The polypeptide is Phosphoglucosamine mutase (Citrobacter koseri (strain ATCC BAA-895 / CDC 4225-83 / SGSC4696)).